A 558-amino-acid polypeptide reads, in one-letter code: Dihydroxy-acid dehydratase (558 aa).

D78 contacts Mg(2+). C119 contributes to the [2Fe-2S] cluster binding site. 2 residues coordinate Mg(2+): D120 and K121. The residue at position 121 (K121) is an N6-carboxylysine. C191 contacts [2Fe-2S] cluster. Residue E443 coordinates Mg(2+). S469 (proton acceptor) is an active-site residue.

Belongs to the IlvD/Edd family. In terms of assembly, homodimer. [2Fe-2S] cluster serves as cofactor. Mg(2+) is required as a cofactor.

The catalysed reaction is (2R)-2,3-dihydroxy-3-methylbutanoate = 3-methyl-2-oxobutanoate + H2O. It carries out the reaction (2R,3R)-2,3-dihydroxy-3-methylpentanoate = (S)-3-methyl-2-oxopentanoate + H2O. Its pathway is amino-acid biosynthesis; L-isoleucine biosynthesis; L-isoleucine from 2-oxobutanoate: step 3/4. It participates in amino-acid biosynthesis; L-valine biosynthesis; L-valine from pyruvate: step 3/4. Functions in the biosynthesis of branched-chain amino acids. Catalyzes the dehydration of (2R,3R)-2,3-dihydroxy-3-methylpentanoate (2,3-dihydroxy-3-methylvalerate) into 2-oxo-3-methylpentanoate (2-oxo-3-methylvalerate) and of (2R)-2,3-dihydroxy-3-methylbutanoate (2,3-dihydroxyisovalerate) into 2-oxo-3-methylbutanoate (2-oxoisovalerate), the penultimate precursor to L-isoleucine and L-valine, respectively. The sequence is that of Dihydroxy-acid dehydratase from Solidesulfovibrio magneticus (strain ATCC 700980 / DSM 13731 / RS-1) (Desulfovibrio magneticus).